A 109-amino-acid polypeptide reads, in one-letter code: Small ribosomal subunit protein bS6 (109 aa).

It belongs to the bacterial ribosomal protein bS6 family.

Its function is as follows. Binds together with bS18 to 16S ribosomal RNA. In Ehrlichia ruminantium (strain Gardel), this protein is Small ribosomal subunit protein bS6.